A 431-amino-acid polypeptide reads, in one-letter code: Protein farnesyltransferase subunit beta (431 aa).

5 PFTB repeats span residues 130-171 (KRKI…SLCD), 182-224 (RKGI…TLLN), 231-273 (TEGV…AILR), 280-322 (VEKL…AILE), and 332-375 (KHAL…AVAE). (2E,6E)-farnesyl diphosphate-binding positions include 258-261 (HGGY) and 301-304 (RSNK). Residues Asp307 and Cys309 each contribute to the Zn(2+) site. 310–313 (YSFW) contacts (2E,6E)-farnesyl diphosphate. His363 contributes to the Zn(2+) binding site.

It belongs to the protein prenyltransferase subunit beta family. In terms of assembly, heterodimer of an alpha (RAM2) and a beta (RAM1) subunit. The cofactor is Zn(2+).

Its subcellular location is the cytoplasm. The catalysed reaction is L-cysteinyl-[protein] + (2E,6E)-farnesyl diphosphate = S-(2E,6E)-farnesyl-L-cysteinyl-[protein] + diphosphate. Functionally, catalyzes the transfer of a farnesyl moiety from farnesyl diphosphate to a cysteine at the fourth position from the C-terminus of several proteins having the C-terminal sequence Cys-aliphatic-aliphatic-X where X is Ser, Ala, Met, Cys, or Gln. Required for the membrane localization of proteins such as a-factor, Ras proteins and other membrane proteins containing the C-terminal CAAX motif. The beta subunit is responsible for isoprenoid and peptide-binding. In Saccharomyces cerevisiae (strain ATCC 204508 / S288c) (Baker's yeast), this protein is Protein farnesyltransferase subunit beta.